The chain runs to 368 residues: Xaa-Pro dipeptidase (368 aa).

Mn(2+) is bound by residues Asp223, Asp234, His298, Glu327, and Glu341.

The protein belongs to the peptidase M24B family. Mn(2+) is required as a cofactor.

It is found in the cytoplasm. It carries out the reaction Xaa-L-Pro dipeptide + H2O = an L-alpha-amino acid + L-proline. The protein is Xaa-Pro dipeptidase (pepQ) of Lactobacillus delbrueckii subsp. lactis.